The chain runs to 343 residues: uncharacterized protein (343 aa).

This is an uncharacterized protein from Acanthamoeba polyphaga mimivirus (APMV).